Reading from the N-terminus, the 205-residue chain is Holliday junction branch migration complex subunit RuvA (205 aa).

The segment at 1–65 (MIGRLRGAVA…SAGLRLYGFL (65 aa)) is domain I. The interval 66–144 (TREDRRAFVL…TDGPVLMSAP (79 aa)) is domain II. The segment at 145–153 (TSSAPSAPA) is flexible linker. Residues 153 to 205 (AKPAPTGDAVAALMGLGVAEVNARRVVEAAAAELGEEATVQALIKAGLKELGR) form a domain III region.

This sequence belongs to the RuvA family. In terms of assembly, homotetramer. Forms an RuvA(8)-RuvB(12)-Holliday junction (HJ) complex. HJ DNA is sandwiched between 2 RuvA tetramers; dsDNA enters through RuvA and exits via RuvB. An RuvB hexamer assembles on each DNA strand where it exits the tetramer. Each RuvB hexamer is contacted by two RuvA subunits (via domain III) on 2 adjacent RuvB subunits; this complex drives branch migration. In the full resolvosome a probable DNA-RuvA(4)-RuvB(12)-RuvC(2) complex forms which resolves the HJ.

The protein resides in the cytoplasm. Functionally, the RuvA-RuvB-RuvC complex processes Holliday junction (HJ) DNA during genetic recombination and DNA repair, while the RuvA-RuvB complex plays an important role in the rescue of blocked DNA replication forks via replication fork reversal (RFR). RuvA specifically binds to HJ cruciform DNA, conferring on it an open structure. The RuvB hexamer acts as an ATP-dependent pump, pulling dsDNA into and through the RuvAB complex. HJ branch migration allows RuvC to scan DNA until it finds its consensus sequence, where it cleaves and resolves the cruciform DNA. The sequence is that of Holliday junction branch migration complex subunit RuvA from Caulobacter vibrioides (strain ATCC 19089 / CIP 103742 / CB 15) (Caulobacter crescentus).